The chain runs to 1217 residues: ATP-dependent helicase/nuclease subunit A (1217 aa).

The 466-residue stretch at 10 to 475 folds into the UvrD-like helicase ATP-binding domain; the sequence is VIWTDAQWQS…IDLSQNFRSR (466 aa). 31-38 is an ATP binding site; it reads AAAGSGKT. Residues 476–786 form the UvrD-like helicase C-terminal domain; that stretch reads KEVLSTTNYI…RMMTIHSSKG (311 aa).

This sequence belongs to the helicase family. AddA subfamily. Heterodimer of AddA and AddB/RexB. Mg(2+) is required as a cofactor.

It carries out the reaction Couples ATP hydrolysis with the unwinding of duplex DNA by translocating in the 3'-5' direction.. The enzyme catalyses ATP + H2O = ADP + phosphate + H(+). Functionally, the heterodimer acts as both an ATP-dependent DNA helicase and an ATP-dependent, dual-direction single-stranded exonuclease. Recognizes the chi site generating a DNA molecule suitable for the initiation of homologous recombination. The AddA nuclease domain is required for chi fragment generation; this subunit has the helicase and 3' -&gt; 5' nuclease activities. In Staphylococcus aureus (strain NCTC 8325 / PS 47), this protein is ATP-dependent helicase/nuclease subunit A.